A 241-amino-acid chain; its full sequence is Small ribosomal subunit protein eS4 (241 aa).

Residues 37–99 (IPLGLLLRDY…ADLYLRIVPD (63 aa)) enclose the S4 RNA-binding domain.

It belongs to the eukaryotic ribosomal protein eS4 family.

The sequence is that of Small ribosomal subunit protein eS4 from Metallosphaera sedula (strain ATCC 51363 / DSM 5348 / JCM 9185 / NBRC 15509 / TH2).